A 213-amino-acid chain; its full sequence is Cytidylate kinase (213 aa).

7-15 is a binding site for ATP; sequence GPAASGKGT.

This sequence belongs to the cytidylate kinase family. Type 1 subfamily.

The protein resides in the cytoplasm. The enzyme catalyses CMP + ATP = CDP + ADP. It carries out the reaction dCMP + ATP = dCDP + ADP. In Rhodospirillum rubrum (strain ATCC 11170 / ATH 1.1.1 / DSM 467 / LMG 4362 / NCIMB 8255 / S1), this protein is Cytidylate kinase.